Reading from the N-terminus, the 314-residue chain is Methionyl-tRNA formyltransferase (314 aa).

Residue 112–115 (SLLP) participates in (6S)-5,6,7,8-tetrahydrofolate binding.

It belongs to the Fmt family.

The enzyme catalyses L-methionyl-tRNA(fMet) + (6R)-10-formyltetrahydrofolate = N-formyl-L-methionyl-tRNA(fMet) + (6S)-5,6,7,8-tetrahydrofolate + H(+). Its function is as follows. Attaches a formyl group to the free amino group of methionyl-tRNA(fMet). The formyl group appears to play a dual role in the initiator identity of N-formylmethionyl-tRNA by promoting its recognition by IF2 and preventing the misappropriation of this tRNA by the elongation apparatus. The protein is Methionyl-tRNA formyltransferase of Legionella pneumophila (strain Paris).